We begin with the raw amino-acid sequence, 238 residues long: 3-dehydroquinate dehydratase (238 aa).

3-dehydroquinate is bound by residues Glu35–Arg37 and Arg70. The active-site Proton donor/acceptor is His133. Lys160 (schiff-base intermediate with substrate) is an active-site residue. Positions 202 and 225 each coordinate 3-dehydroquinate.

It belongs to the type-I 3-dehydroquinase family. Homodimer.

It catalyses the reaction 3-dehydroquinate = 3-dehydroshikimate + H2O. The protein operates within metabolic intermediate biosynthesis; chorismate biosynthesis; chorismate from D-erythrose 4-phosphate and phosphoenolpyruvate: step 3/7. In terms of biological role, involved in the third step of the chorismate pathway, which leads to the biosynthesis of aromatic amino acids. Catalyzes the cis-dehydration of 3-dehydroquinate (DHQ) and introduces the first double bond of the aromatic ring to yield 3-dehydroshikimate. This chain is 3-dehydroquinate dehydratase, found in Staphylococcus aureus (strain USA300).